We begin with the raw amino-acid sequence, 325 residues long: GMP reductase (325 aa).

Cys174 serves as the catalytic Thioimidate intermediate. 203-226 (IIADGGIRTHGDIAKSVRFGATMV) provides a ligand contact to NADP(+).

Belongs to the IMPDH/GMPR family. GuaC type 2 subfamily.

The catalysed reaction is IMP + NH4(+) + NADP(+) = GMP + NADPH + 2 H(+). Its function is as follows. Catalyzes the irreversible NADPH-dependent deamination of GMP to IMP. It functions in the conversion of nucleobase, nucleoside and nucleotide derivatives of G to A nucleotides, and in maintaining the intracellular balance of A and G nucleotides. The polypeptide is GMP reductase (Enterococcus faecalis (strain ATCC 700802 / V583)).